The sequence spans 250 residues: Imidazole glycerol phosphate synthase subunit HisF (250 aa).

Residues aspartate 11 and aspartate 130 contribute to the active site.

It belongs to the HisA/HisF family. As to quaternary structure, heterodimer of HisH and HisF.

Its subcellular location is the cytoplasm. It catalyses the reaction 5-[(5-phospho-1-deoxy-D-ribulos-1-ylimino)methylamino]-1-(5-phospho-beta-D-ribosyl)imidazole-4-carboxamide + L-glutamine = D-erythro-1-(imidazol-4-yl)glycerol 3-phosphate + 5-amino-1-(5-phospho-beta-D-ribosyl)imidazole-4-carboxamide + L-glutamate + H(+). It participates in amino-acid biosynthesis; L-histidine biosynthesis; L-histidine from 5-phospho-alpha-D-ribose 1-diphosphate: step 5/9. IGPS catalyzes the conversion of PRFAR and glutamine to IGP, AICAR and glutamate. The HisF subunit catalyzes the cyclization activity that produces IGP and AICAR from PRFAR using the ammonia provided by the HisH subunit. The protein is Imidazole glycerol phosphate synthase subunit HisF of Bacteroides fragilis (strain ATCC 25285 / DSM 2151 / CCUG 4856 / JCM 11019 / LMG 10263 / NCTC 9343 / Onslow / VPI 2553 / EN-2).